We begin with the raw amino-acid sequence, 174 residues long: Trypsin inhibitor (174 aa).

Cystine bridges form between cysteine 40-cysteine 86 and cysteine 131-cysteine 140.

The protein belongs to the protease inhibitor I3 (leguminous Kunitz-type inhibitor) family. Heterodimer of an alpha and a beta chain linked by a disulfide bond.

Functionally, inhibits trypsin and chymotrypsin with a 1:1 stoichiometry, with dissociation constants of 1.56 nM and 120 nM respectively. Inhibits plasma kallikrein, factor XIIa and plasmin with dissociation constants of 5.0 nM, 150 nM and 18 nM respectively. Does not inhibit factor Xa, thrombin, tissue kallikrein or cysteine proteinases such as papain and bromelain. In Enterolobium contortisiliquum (Pacara earpod tree), this protein is Trypsin inhibitor.